Consider the following 692-residue polypeptide: Threonine--tRNA ligase (692 aa).

Residues 2 to 59 (AEAHISITVNGEAKEVEASQTGVELFADDKNIIAVRLNGELRDLYTPLHDGDNVESVT) form the TGS domain. Positions 255–561 (DHRKLGQEMD…LLEHYAGAFP (307 aa)) are catalytic. Zn(2+) is bound by residues C360, H411, and H538.

Belongs to the class-II aminoacyl-tRNA synthetase family. As to quaternary structure, homodimer. It depends on Zn(2+) as a cofactor.

It localises to the cytoplasm. The catalysed reaction is tRNA(Thr) + L-threonine + ATP = L-threonyl-tRNA(Thr) + AMP + diphosphate + H(+). Catalyzes the attachment of threonine to tRNA(Thr) in a two-step reaction: L-threonine is first activated by ATP to form Thr-AMP and then transferred to the acceptor end of tRNA(Thr). Also edits incorrectly charged L-seryl-tRNA(Thr). The protein is Threonine--tRNA ligase of Bifidobacterium animalis subsp. lactis (strain AD011).